Consider the following 380-residue polypeptide: 3-methylitaconate isomerase (380 aa).

The protein belongs to the PrpF family. Homotetramer.

The catalysed reaction is 2-methylene-3-methylsuccinate = dimethylmaleate. It participates in cofactor degradation; nicotinate degradation; propanoate and pyruvate from 6-hydroxynicotinate: step 6/8. Inhibited by oxidized glutathione, p-chloromercuriphenylsulfonic acid and iodoacetic acid. Not inhibited by the chelating agent alpha,alpha-dipyridyl. Activity is slightly increased by EDTA. Not activated by Fe(2+), Mg(2+), Mn(2+) or Ca(2+). Unaffected by K(+), Na(+), NH4(+), Rb(+) or Li(+). Functionally, catalyzes the reversible isomerization of (R)-3-methylitaconate to 2,3-dimethylmaleate. Has very low isomerase activity with itaconate. In Eubacterium barkeri (Clostridium barkeri), this protein is 3-methylitaconate isomerase (mii).